Reading from the N-terminus, the 543-residue chain is CTP synthase (543 aa).

The segment at 1–265 (MTRYIFVTGG…DDYVVERFGL (265 aa)) is amidoligase domain. CTP is bound at residue Ser13. UTP is bound at residue Ser13. Residues 14 to 19 (SLGKGI) and Asp71 contribute to the ATP site. Positions 71 and 139 each coordinate Mg(2+). Residues 146-148 (DIE), 186-191 (KTKPTQ), and Lys222 each bind CTP. Residues 186–191 (KTKPTQ) and Lys222 each bind UTP. The Glutamine amidotransferase type-1 domain maps to 290–541 (NIAMVGKYME…VNAALEYKAK (252 aa)). Residue Gly351 participates in L-glutamine binding. The active-site Nucleophile; for glutamine hydrolysis is the Cys378. Residues 379–382 (LGMQ), Glu402, and Arg469 each bind L-glutamine. Catalysis depends on residues His514 and Glu516.

It belongs to the CTP synthase family. Homotetramer.

It catalyses the reaction UTP + L-glutamine + ATP + H2O = CTP + L-glutamate + ADP + phosphate + 2 H(+). It carries out the reaction L-glutamine + H2O = L-glutamate + NH4(+). The enzyme catalyses UTP + NH4(+) + ATP = CTP + ADP + phosphate + 2 H(+). It participates in pyrimidine metabolism; CTP biosynthesis via de novo pathway; CTP from UDP: step 2/2. Allosterically activated by GTP, when glutamine is the substrate; GTP has no effect on the reaction when ammonia is the substrate. The allosteric effector GTP functions by stabilizing the protein conformation that binds the tetrahedral intermediate(s) formed during glutamine hydrolysis. Inhibited by the product CTP, via allosteric rather than competitive inhibition. Functionally, catalyzes the ATP-dependent amination of UTP to CTP with either L-glutamine or ammonia as the source of nitrogen. Regulates intracellular CTP levels through interactions with the four ribonucleotide triphosphates. The polypeptide is CTP synthase (Stutzerimonas stutzeri (strain A1501) (Pseudomonas stutzeri)).